A 66-amino-acid chain; its full sequence is MAIRKRFIAGAKCPACQAQDSMAMWRENNIDIVECVKCGHQMREADKEARDHVRKDEQVIGIFHPD.

This is an uncharacterized protein from Escherichia coli O157:H7.